The following is a 396-amino-acid chain: Cathepsin D (396 aa).

The signal sequence occupies residues 1 to 18 (MKFLYLFLFAVFAWTSDA). The propeptide at 19–61 (IVRIPLKKFRSIRRTLSDSGLNVEQLLAGTNSLQHNQGFPSSN) is activation peptide. Residues 76–393 (YYGEIGLGTP…DRESNRVGFA (318 aa)) form the Peptidase A1 domain. D94 is a catalytic residue. Cysteines 107 and 114 form a disulfide. N131 carries an N-linked (GlcNAc...) asparagine glycan. An intrachain disulfide couples C272 to C276. D281 is a catalytic residue. A disulfide bridge connects residues C315 and C352.

It belongs to the peptidase A1 family. As to quaternary structure, monomer.

Its subcellular location is the lysosome. The enzyme catalyses Specificity similar to, but narrower than, that of pepsin A. Does not cleave the 4-Gln-|-His-5 bond in B chain of insulin.. Its activity is regulated as follows. Inhibited by pepstatin. In terms of biological role, acid protease active in intracellular protein breakdown. The protein is Cathepsin D (ctsd) of Clupea harengus (Atlantic herring).